The sequence spans 152 residues: Transcriptional regulator MraZ (152 aa).

2 SpoVT-AbrB domains span residues 5–52 (ASAI…PFDE) and 81–124 (AHEC…DETA).

This sequence belongs to the MraZ family. Forms oligomers.

It is found in the cytoplasm. Its subcellular location is the nucleoid. The chain is Transcriptional regulator MraZ from Shewanella sediminis (strain HAW-EB3).